The primary structure comprises 816 residues: H(+)/Cl(-) exchange transporter 5 (816 aa).

A disordered region spans residues 1–26; it reads MAMWQGAMDNRGFQQGSFSSFQNSSS. The Cytoplasmic segment spans residues 1–124; it reads MAMWQGAMDN…WALIHSVSDA (124 aa). Low complexity predominate over residues 12-25; sequence GFQQGSFSSFQNSS. The next 2 membrane-spanning stretches (helical) occupy residues 125 to 162 and 208 to 231; these read FSGW…ICTG and VNYF…VKVF. Residues 237–241 carry the Selectivity filter part_1 motif; sequence GSGIP. S238 contacts chloride. Residues 240–247 constitute an intramembrane region (helical); sequence IPEIKTIL. 2 consecutive transmembrane segments (helical) span residues 256 to 275 and 281 to 300; these read LGKW…VSSG and EGPL…HCFN. A Selectivity filter part_2 motif is present at residues 279 to 283; it reads GKEGP. Intramembrane regions (helical) lie at residues 312–324 and 328–336; these read VLSA…VSVA and PIGGVLFSL. A run of 5 helical transmembrane segments spans residues 348-366, 389-415, 422-442, 498-518, and 523-542; these read LWRS…RSIN, LVPF…AWCR, LGKY…ILAF, MWQL…TFGM, and GLFI…LGVG. A Selectivity filter part_3 motif is present at residues 523–527; sequence GLFIP. A chloride-binding site is contributed by F525. An intramembrane region (helical) is located at residues 570 to 584; sequence GLYAMVGAAACLGGV. The segment at residues 585–587 is an intramembrane region (note=Loop between two helices); sequence TRM. The segment at residues 588–599 is an intramembrane region (helical); it reads TVSLVVIMFELT. The segment at residues 600 to 604 is an intramembrane region (note=Loop between two helices); sequence GGLEY. The chain crosses the membrane as a helical span at residues 605 to 622; the sequence is IVPLMAAAMTSKWVADAL. Residues 623-816 lie on the Cytoplasmic side of the membrane; sequence GREGIYDAHI…NQDPDSILFN (194 aa). Y628 is a binding site for chloride. 2 CBS domains span residues 656 to 720 and 752 to 812; these read MKPR…ARKK and ILDL…DPDS. ATP contacts are provided by residues T666, 687-689, and 794-797; these read YSG and TKKD.

It belongs to the chloride channel (TC 2.A.49) family. ClC-5/CLCN5 subfamily. As to quaternary structure, interacts with NEDD4 and NEDD4L. Ubiquitinated by NEDD4L in the presence of albumin; which promotes endocytosis and proteasomal degradation. Kidney. Moderately expressed in aortic vascular smooth muscle and endothelial cells, and at a slightly higher level in the coronary vascular smooth muscle.

It is found in the golgi apparatus membrane. The protein localises to the endosome membrane. The protein resides in the cell membrane. It catalyses the reaction 2 chloride(in) + H(+)(out) = 2 chloride(out) + H(+)(in). Functionally, proton-coupled chloride transporter. Functions as antiport system and exchanges chloride ions against protons. Important for normal acidification of the endosome lumen. May play an important role in renal tubular function. The CLC channel family contains both chloride channels and proton-coupled anion transporters that exchange chloride or another anion for protons. The absence of conserved gating glutamate residues is typical for family members that function as channels. The chain is H(+)/Cl(-) exchange transporter 5 from Homo sapiens (Human).